The following is a 118-amino-acid chain: Large ribosomal subunit protein uL22c (118 aa).

This sequence belongs to the universal ribosomal protein uL22 family. In terms of assembly, part of the 50S ribosomal subunit.

The protein resides in the plastid. It is found in the organellar chromatophore. In terms of biological role, this protein binds specifically to 23S rRNA. The globular domain of the protein is located near the polypeptide exit tunnel on the outside of the subunit, while an extended beta-hairpin is found that lines the wall of the exit tunnel in the center of the 70S ribosome. This is Large ribosomal subunit protein uL22c (rpl22) from Paulinella chromatophora.